The following is a 223-amino-acid chain: Ubiquitin-conjugating enzyme E2 S (223 aa).

Residue Met1 is modified to N-acetylmethionine. Positions His11–Gly157 constitute a UBC core domain. Cys95 acts as the Glycyl thioester intermediate in catalysis. A disordered region spans residues His155–Leu223. Residues Gly169–Pro195 show a composition bias toward low complexity. Ser174 is modified (phosphoserine). Basic residues predominate over residues Ala209–Leu223.

The protein belongs to the ubiquitin-conjugating enzyme family. In terms of assembly, component of the APC/C complex, composed of at least 14 distinct subunits that assemble into a complex of at least 19 chains with a combined molecular mass of around 1.2 MDa. Within this complex, directly interacts with ANAPC2 and ANAPC4. Interacts with CDC20, FZR1/CDH1 and VHL. In terms of processing, autoubiquitinated by the APC/C complex during G1, leading to its degradation by the proteasome.

It carries out the reaction S-ubiquitinyl-[E1 ubiquitin-activating enzyme]-L-cysteine + [E2 ubiquitin-conjugating enzyme]-L-cysteine = [E1 ubiquitin-activating enzyme]-L-cysteine + S-ubiquitinyl-[E2 ubiquitin-conjugating enzyme]-L-cysteine.. It functions in the pathway protein modification; protein ubiquitination. Accepts ubiquitin from the E1 complex and catalyzes its covalent attachment to other proteins. Catalyzes 'Lys-11'-linked polyubiquitination. Acts as an essential factor of the anaphase promoting complex/cyclosome (APC/C), a cell cycle-regulated ubiquitin ligase that controls progression through mitosis. Acts by specifically elongating 'Lys-11'-linked polyubiquitin chains initiated by the E2 enzyme UBE2C/UBCH10 on APC/C substrates, enhancing the degradation of APC/C substrates by the proteasome and promoting mitotic exit. Also acts by elongating ubiquitin chains initiated by the E2 enzyme UBE2D1/UBCH5 in vitro; it is however unclear whether UBE2D1/UBCH5 acts as an E2 enzyme for the APC/C in vivo. Also involved in ubiquitination and subsequent degradation of VHL, resulting in an accumulation of HIF1A. In vitro able to promote polyubiquitination using all 7 ubiquitin Lys residues, except 'Lys-48'-linked polyubiquitination. This chain is Ubiquitin-conjugating enzyme E2 S (UBE2S), found in Bos taurus (Bovine).